The sequence spans 382 residues: Type II secretion system protein L (382 aa).

Topologically, residues 1-233 (MSGVSALFLP…QQSSQWRRWR (233 aa)) are cytoplasmic. A helical membrane pass occupies residues 234 to 254 (PLLGLVGLWLVLQWGFTLVQA). The Periplasmic segment spans residues 255–382 (WQLQREGDRY…TVSARLVIGG (128 aa)).

The protein belongs to the GSP L family. Type II secretion system is composed of four main components: the outer membrane complex, the inner membrane complex, the cytoplasmic secretion ATPase and the periplasm-spanning pseudopilus. Forms homodimers. Interacts with XcpZ/GspM. Interacts with XcpR/GspE and XcpS/GspF.

It localises to the cell inner membrane. Functionally, inner membrane component of the type II secretion system required for the energy-dependent secretion of extracellular factors such as proteases and toxins from the periplasm. Plays a role in the complex assembly and recruits XcpZ resulting in a stable complex in the inner membrane. Provides thus a link between the energy-providing XcpR protein in the cytoplasm and the rest of the T2SS machinery. This chain is Type II secretion system protein L (xcpY), found in Pseudomonas aeruginosa (strain ATCC 15692 / DSM 22644 / CIP 104116 / JCM 14847 / LMG 12228 / 1C / PRS 101 / PAO1).